A 750-amino-acid polypeptide reads, in one-letter code: Photosystem I P700 chlorophyll a apoprotein A1 (750 aa).

A run of 8 helical transmembrane segments spans residues 70–93 (VFSAHFGQLSIIFLWLSGMYFHGA), 156–179 (LYCTAIGALVFAALMLFAGWFHYH), 195–219 (LNHHLAGLLGLGSLSWAGHQVHVSL), 291–309 (IAHHHLAIAILFLIAGHMY), 346–369 (WHAQLSLNLAMLGSLTIVVAHHMY), 385–411 (LSLFTHHMWIGGFLIVGAAAHAAIFMV), 433–455 (AIISHLNWACIFLGFHSFGLYIH), and 531–549 (FLVHHIHAFTIHVTVLILL). Residues C573 and C582 each coordinate [4Fe-4S] cluster. The next 2 helical transmembrane spans lie at 589–610 (HVFLGLFWMYNAISVVIFHFSW) and 664–686 (LSAYGLFFLGAHFVWAFSLMFLF). H675 contributes to the chlorophyll a' binding site. M683 and Y691 together coordinate chlorophyll a. Phylloquinone is bound at residue W692. Residues 724-744 (AVGVTHYLLGGIATTWAFFLA) traverse the membrane as a helical segment.

Belongs to the PsaA/PsaB family. The PsaA/B heterodimer binds the P700 chlorophyll special pair and subsequent electron acceptors. PSI consists of a core antenna complex that captures photons, and an electron transfer chain that converts photonic excitation into a charge separation. The eukaryotic PSI reaction center is composed of at least 11 subunits. Requires P700 is a chlorophyll a/chlorophyll a' dimer, A0 is one or more chlorophyll a, A1 is one or both phylloquinones and FX is a shared 4Fe-4S iron-sulfur center. as cofactor.

Its subcellular location is the plastid. The protein localises to the chloroplast thylakoid membrane. The enzyme catalyses reduced [plastocyanin] + hnu + oxidized [2Fe-2S]-[ferredoxin] = oxidized [plastocyanin] + reduced [2Fe-2S]-[ferredoxin]. Functionally, psaA and PsaB bind P700, the primary electron donor of photosystem I (PSI), as well as the electron acceptors A0, A1 and FX. PSI is a plastocyanin-ferredoxin oxidoreductase, converting photonic excitation into a charge separation, which transfers an electron from the donor P700 chlorophyll pair to the spectroscopically characterized acceptors A0, A1, FX, FA and FB in turn. Oxidized P700 is reduced on the lumenal side of the thylakoid membrane by plastocyanin. The protein is Photosystem I P700 chlorophyll a apoprotein A1 of Nicotiana sylvestris (Wood tobacco).